A 428-amino-acid chain; its full sequence is Aspartate--tRNA(Asp) ligase (428 aa).

L-aspartate is bound at residue E166. An aspartate region spans residues 188–191 (QLYK). Residue R210 coordinates L-aspartate. ATP is bound by residues 210 to 212 (RAE), 218 to 220 (RHL), and E351. Positions 351 and 354 each coordinate Mg(2+). 2 residues coordinate L-aspartate: S354 and R358. Position 399–402 (399–402 (GLER)) interacts with ATP.

Belongs to the class-II aminoacyl-tRNA synthetase family. Type 2 subfamily. In terms of assembly, homodimer. Mg(2+) serves as cofactor.

The protein localises to the cytoplasm. The enzyme catalyses tRNA(Asp) + L-aspartate + ATP = L-aspartyl-tRNA(Asp) + AMP + diphosphate. Its function is as follows. Catalyzes the attachment of L-aspartate to tRNA(Asp) in a two-step reaction: L-aspartate is first activated by ATP to form Asp-AMP and then transferred to the acceptor end of tRNA(Asp). This is Aspartate--tRNA(Asp) ligase from Thermoplasma volcanium (strain ATCC 51530 / DSM 4299 / JCM 9571 / NBRC 15438 / GSS1).